The primary structure comprises 405 residues: GTPase Obg (405 aa).

The 159-residue stretch at Met-1–Leu-159 folds into the Obg domain. The interval Asn-127–Glu-148 is disordered. The segment covering Arg-129–Pro-143 has biased composition (polar residues). The region spanning Ala-160 to Asp-333 is the OBG-type G domain. GTP-binding positions include Gly-166–Ser-173, Phe-191–Val-195, Asp-213–Gly-216, Asn-283–Asp-286, and Ser-314–Leu-316. Residues Ser-173 and Thr-193 each contribute to the Mg(2+) site. A compositionally biased stretch (acidic residues) spans Ala-383–Gly-398. Residues Ala-383 to Arg-405 are disordered.

This sequence belongs to the TRAFAC class OBG-HflX-like GTPase superfamily. OBG GTPase family. In terms of assembly, monomer. Mg(2+) is required as a cofactor.

Its subcellular location is the cytoplasm. An essential GTPase which binds GTP, GDP and possibly (p)ppGpp with moderate affinity, with high nucleotide exchange rates and a fairly low GTP hydrolysis rate. Plays a role in control of the cell cycle, stress response, ribosome biogenesis and in those bacteria that undergo differentiation, in morphogenesis control. This chain is GTPase Obg, found in Azotobacter vinelandii (strain DJ / ATCC BAA-1303).